Consider the following 107-residue polypeptide: Glutaredoxin 4 (107 aa).

Positions 4-106 (IEKIERQIKD…KIISNAVLNS (103 aa)) constitute a Glutaredoxin domain. K21 lines the glutathione pocket. Residue C29 coordinates [2Fe-2S] cluster. Residues R58, F70, and 83-84 (CS) each bind glutathione.

Belongs to the glutaredoxin family. Monothiol subfamily. As to quaternary structure, homodimer.

The protein localises to the cytoplasm. Its function is as follows. Monothiol glutaredoxin involved in the biogenesis of iron-sulfur clusters. The polypeptide is Glutaredoxin 4 (grxD) (Buchnera aphidicola subsp. Schizaphis graminum (strain Sg)).